The primary structure comprises 228 residues: Ribonuclease HII (228 aa).

Residues 26–214 (RAVAGVDEVG…VRAHSRFPLD (189 aa)) enclose the RNase H type-2 domain. The a divalent metal cation site is built by Asp32, Glu33, and Asp124.

It belongs to the RNase HII family. Mn(2+) serves as cofactor. It depends on Mg(2+) as a cofactor.

It localises to the cytoplasm. The enzyme catalyses Endonucleolytic cleavage to 5'-phosphomonoester.. Endonuclease that specifically degrades the RNA of RNA-DNA hybrids. The chain is Ribonuclease HII from Solibacter usitatus (strain Ellin6076).